Reading from the N-terminus, the 646-residue chain is Amyloid beta A4 precursor protein-binding family B member 1-interacting protein (646 aa).

The tract at residues 82–141 is disordered; that stretch reads FATERDTSKGSVPVAPAPSKPQSNFSLPASFDSSKPATSSNSIAAPPPPPAFKPSKEEEE. Residues 101–116 are compositionally biased toward polar residues; sequence KPQSNFSLPASFDSSK. The 87-residue stretch at 162 to 248 folds into the Ras-associating domain; sequence KKLVVKVEIT…NKVLFQEKKH (87 aa). Residues 292 to 401 form the PH domain; it reads VPDLEGVLYL…WVTGIRVAKY (110 aa). A disordered region spans residues 420 to 646; it reads ASWANRTIQA…NAMQKKRTQP (227 aa). The span at 429 to 445 shows a compositional bias: low complexity; it reads ASSTASTPSPTPKAKAA. 4 stretches are compositionally biased toward pro residues: residues 465 to 500, 509 to 536, 560 to 577, and 584 to 598; these read LPPP…PPVP, FPPP…PPPE, LPPP…PPPA, and APPP…PAPA.

This sequence belongs to the MRL family.

It is found in the cell membrane. Its subcellular location is the cytoplasm. The protein localises to the cytoskeleton. Its function is as follows. Appears to function in the signal transduction from Ras activation to actin cytoskeletal remodeling. This Danio rerio (Zebrafish) protein is Amyloid beta A4 precursor protein-binding family B member 1-interacting protein (apbb1ip).